Reading from the N-terminus, the 179-residue chain is MEGEELIYHNIINEILVGYIKYYINDISEHELSPYQQQIKKILTYYDECLNKQVTITFSLTSAQEIKTQFTGVVTELFKDLINWGRICGFIVFSAKMAKYCKDANNHLESTVITTAYNFMKHNLLPWMISHGGQEEFLAFSLHSDIYSVIFNIKYFLSKFCNHMFFRSCVQLLRNCNLI.

Residues 76 to 95 carry the BH1 motif; the sequence is ELFKDLINWGRICGFIVFSA. Positions 126–141 match the BH2 motif; the sequence is PWMISHGGQEEFLAFS.

It belongs to the Bcl-2 family. Interacts with host BECN1 (via BH3 homology domain); this interaction allows the virus to inhibit BECN1, and thus autophagy. Interacts with host BID. Interacts with host BAX.

The protein localises to the host mitochondrion. Its subcellular location is the host endoplasmic reticulum. Its function is as follows. Suppresses apoptosis in host cell to promote the viral replication. Has the ability to potentially bind to all the members of the proapoptotic Bcl-2 family. Inhibits autophagy by interacting with host Beclin 1 (BECN1). This is Apoptosis regulator Bcl-2 homolog from African swine fever virus (isolate Tick/South Africa/Pretoriuskop Pr4/1996) (ASFV).